Consider the following 187-residue polypeptide: Protein TIFY 11b (187 aa).

Residues 68–103 (ATAPAAPLTIFYGGRMVVFEDFPADKAAEVMRMASS) enclose the Tify domain. A Jas motif is present at residues 121–145 (PIMRKASLQRFFAKRKDRLAATTPY). The Nuclear localization signal signature appears at 123-130 (MRKASLQR). The interval 139–168 (LAATTPYARPSPAETKASEPEEKKTPTSWL) is disordered. The segment covering 154–163 (KASEPEEKKT) has biased composition (basic and acidic residues).

This sequence belongs to the TIFY/JAZ family. In terms of assembly, interacts with COI1B in a coronatine-dependent manner. Coronatine is an analog of jasmonoyl isoleucine (JA-Ile). In terms of processing, ubiquitinated. Targeted for degradation by the SCF(COI1) E3 ubiquitin ligase-proteasome pathway during jasmonate signaling.

It is found in the nucleus. Its function is as follows. Repressor of jasmonate responses. This Oryza sativa subsp. japonica (Rice) protein is Protein TIFY 11b.